Here is a 217-residue protein sequence, read N- to C-terminus: UPF0502 protein VF_A0604 (217 aa).

It belongs to the UPF0502 family.

The polypeptide is UPF0502 protein VF_A0604 (Aliivibrio fischeri (strain ATCC 700601 / ES114) (Vibrio fischeri)).